The chain runs to 478 residues: Cytochrome P450 monooxygenase ATR3 (478 aa).

A helical transmembrane segment spans residues 20-42 (AVAFVTASALYYVLPAAISHIQL). 2 N-linked (GlcNAc...) asparagine glycosylation sites follow: N159 and N268.

Belongs to the cytochrome P450 family. Requires heme as cofactor.

The protein resides in the membrane. It functions in the pathway mycotoxin biosynthesis. Functionally, cytochrome P450 monooxygenase; part of the core atranone cluster (CAC) which products are predicted to catalyze most or all steps of mycotoxin atranone synthesis, starting from geranylgeranyl pyrophosphate (GGPP). The initial cyclization of GGPP to dolabellane is probably performed by the terpene cyclase ATR13. The Baeyer-Villiger oxidation near the end of the atranone synthesis, which converts atranones D and E to atranones F and G is predicted to be catalyzed by the monooxygenase ATR8. Of the CAC's other predicted gene products, the reducing PKS ATR6 might synthesize a polyketide chain. This polyketide is probably transferred onto the atranone backbone by the polyketide transferase ATR5. Other predicted CAC products include 4 oxygenases (ATR2, ATR3, ATR4, and ATR14), 3 short-chain reductases (ATR7, ATR9, and ATR10), and a methyltransferase (ATR12). These may all be involved in the various steps of atranone biosynthesis, although their specific roles must await experimental determination. The polypeptide is Cytochrome P450 monooxygenase ATR3 (Stachybotrys chlorohalonatus (strain IBT 40285)).